A 318-amino-acid polypeptide reads, in one-letter code: UDP-N-acetylenolpyruvoylglucosamine reductase (318 aa).

Residues 39-202 (VGGPADLLVR…TRVQLTLRPG (164 aa)) enclose the FAD-binding PCMH-type domain. R182 is a catalytic residue. Positions 214–223 (DRDGRRRTQP) are enriched in basic and acidic residues. Residues 214–235 (DRDGRRRTQPLDRPTFGSTFTN) form a disordered region. S231 acts as the Proton donor in catalysis. E301 is an active-site residue.

It belongs to the MurB family. FAD is required as a cofactor.

It localises to the cytoplasm. It carries out the reaction UDP-N-acetyl-alpha-D-muramate + NADP(+) = UDP-N-acetyl-3-O-(1-carboxyvinyl)-alpha-D-glucosamine + NADPH + H(+). Its pathway is cell wall biogenesis; peptidoglycan biosynthesis. Its function is as follows. Cell wall formation. The chain is UDP-N-acetylenolpyruvoylglucosamine reductase from Anaeromyxobacter sp. (strain Fw109-5).